A 356-amino-acid chain; its full sequence is MSNQAALKLVGKEDGDKQRALEAALAQIDRAFGKGSVMKLGEKGKVEMESISTGSLGLDIALGIGGLPKGRVIEIYGPESSGKTTLALHVVAECQKAGGTAAFVDAEHALDPGYAFKLGVNLDNLLVSQPDNGEQALEITDTLVRSGAVDIVVIDSVAALTPKAEIEGEMGDSLPGLQARLMSQALRKLTASINKANTIVIFINQIRHKIGVMYGSPETTTGGNALKFYASVRLDIRRTGSIKNRDEIVGNNVRVKVVKNKVAPPFREVEFDIMYGEGISKLGEIIDLGVKAGIIDKAGSWFSYNSQRIGQGRDNVREFLKVNKDLAAEIEAAVRKSSQKIEEELLVGGPEDGDDE.

77 to 84 is an ATP binding site; that stretch reads GPESSGKT.

The protein belongs to the RecA family.

Its subcellular location is the cytoplasm. In terms of biological role, can catalyze the hydrolysis of ATP in the presence of single-stranded DNA, the ATP-dependent uptake of single-stranded DNA by duplex DNA, and the ATP-dependent hybridization of homologous single-stranded DNAs. It interacts with LexA causing its activation and leading to its autocatalytic cleavage. The protein is Protein RecA of Caulobacter sp. (strain K31).